We begin with the raw amino-acid sequence, 309 residues long: MPAKTKEPVALVITGPTASGKSALAHEVALRTGAEIISADSRQIYRELTIGSAKPTPEMLGEVPYHFINEKTIGEPYSSGAFATESRARIAMIRKRGNPVIVAGGSPLYLQGLIEGFSDLPPADPKIREKLQKELAEQGSRALYRKLQDLDPERAATLDHTKTHRLIRNLEIIELIGKSSKPPSPTPEMQFHAVALNFPREELYQRINLRVEEMMSEGLLQEAEALLKKYRPEISNRTLPALLTVGYQELFDHLERKTPLEGAVTLIQQHTRNYAKRQLTFLRNRMQLNWIQAPLTAQERTELAESLLS.

15 to 22 lines the ATP pocket; the sequence is GPTASGKS. 17–22 is a substrate binding site; it reads TASGKS. The interaction with substrate tRNA stretch occupies residues 40 to 43; that stretch reads DSRQ.

Belongs to the IPP transferase family. As to quaternary structure, monomer. It depends on Mg(2+) as a cofactor.

The enzyme catalyses adenosine(37) in tRNA + dimethylallyl diphosphate = N(6)-dimethylallyladenosine(37) in tRNA + diphosphate. Catalyzes the transfer of a dimethylallyl group onto the adenine at position 37 in tRNAs that read codons beginning with uridine, leading to the formation of N6-(dimethylallyl)adenosine (i(6)A). The polypeptide is tRNA dimethylallyltransferase (Chlorobium phaeovibrioides (strain DSM 265 / 1930) (Prosthecochloris vibrioformis (strain DSM 265))).